The sequence spans 254 residues: 5'-nucleotidase SurE (254 aa).

Residues aspartate 8, aspartate 9, serine 38, and asparagine 91 each coordinate a divalent metal cation.

The protein belongs to the SurE nucleotidase family. It depends on a divalent metal cation as a cofactor.

Its subcellular location is the cytoplasm. The enzyme catalyses a ribonucleoside 5'-phosphate + H2O = a ribonucleoside + phosphate. Nucleotidase that shows phosphatase activity on nucleoside 5'-monophosphates. This is 5'-nucleotidase SurE from Anaeromyxobacter dehalogenans (strain 2CP-C).